A 371-amino-acid polypeptide reads, in one-letter code: Bifunctional enzyme IspD/IspF (371 aa).

The segment at 1–210 (MSEISLIMLA…LDLPKPSFEI (210 aa)) is 2-C-methyl-D-erythritol 4-phosphate cytidylyltransferase. Residues 211–371 (FTGNGFDVHE…NLKYFDWTRL (161 aa)) form a 2-C-methyl-D-erythritol 2,4-cyclodiphosphate synthase region. Residues Asp-217 and His-219 each coordinate a divalent metal cation. Residues 217–219 (DVH) and 243–244 (HS) each bind 4-CDP-2-C-methyl-D-erythritol 2-phosphate. His-251 contacts a divalent metal cation. Residues 265–267 (DIG), 270–274 (YPDTD), 341–344 (TTTE), Phe-348, and Arg-351 contribute to the 4-CDP-2-C-methyl-D-erythritol 2-phosphate site.

It in the N-terminal section; belongs to the IspD/TarI cytidylyltransferase family. IspD subfamily. In the C-terminal section; belongs to the IspF family. A divalent metal cation is required as a cofactor.

It carries out the reaction 2-C-methyl-D-erythritol 4-phosphate + CTP + H(+) = 4-CDP-2-C-methyl-D-erythritol + diphosphate. The catalysed reaction is 4-CDP-2-C-methyl-D-erythritol 2-phosphate = 2-C-methyl-D-erythritol 2,4-cyclic diphosphate + CMP. Its pathway is isoprenoid biosynthesis; isopentenyl diphosphate biosynthesis via DXP pathway; isopentenyl diphosphate from 1-deoxy-D-xylulose 5-phosphate: step 2/6. It functions in the pathway isoprenoid biosynthesis; isopentenyl diphosphate biosynthesis via DXP pathway; isopentenyl diphosphate from 1-deoxy-D-xylulose 5-phosphate: step 4/6. Bifunctional enzyme that catalyzes the formation of 4-diphosphocytidyl-2-C-methyl-D-erythritol from CTP and 2-C-methyl-D-erythritol 4-phosphate (MEP) (IspD), and catalyzes the conversion of 4-diphosphocytidyl-2-C-methyl-D-erythritol 2-phosphate (CDP-ME2P) to 2-C-methyl-D-erythritol 2,4-cyclodiphosphate (ME-CPP) with a corresponding release of cytidine 5-monophosphate (CMP) (IspF). This is Bifunctional enzyme IspD/IspF from Campylobacter jejuni subsp. doylei (strain ATCC BAA-1458 / RM4099 / 269.97).